The chain runs to 493 residues: NAD(P)H-quinone oxidoreductase chain 4, chloroplastic (493 aa).

14 consecutive transmembrane segments (helical) span residues 4–24, 34–54, 87–107, 111–131, 134–154, 167–187, 212–232, 242–262, 276–296, 313–333, 334–354, 385–405, 417–437, and 462–482; these read FPWL…IPLL, WYTL…FGYY, MGLI…AWPI, PKLF…LFTS, LFLF…LISL, FIFY…TVCF, ILYL…PFHT, HYST…YGWI, FAPW…SVCL, MGFV…GAIC, QMIS…TTYD, SLAL…LGII, FIIL…LSML, and VFII…PNIL.

It belongs to the complex I subunit 4 family.

The protein localises to the plastid. The protein resides in the chloroplast thylakoid membrane. It carries out the reaction a plastoquinone + NADH + (n+1) H(+)(in) = a plastoquinol + NAD(+) + n H(+)(out). It catalyses the reaction a plastoquinone + NADPH + (n+1) H(+)(in) = a plastoquinol + NADP(+) + n H(+)(out). This Chara vulgaris (Common stonewort) protein is NAD(P)H-quinone oxidoreductase chain 4, chloroplastic.